A 134-amino-acid chain; its full sequence is Proline-rich protein 4 (134 aa).

An N-terminal signal peptide occupies residues 1–16; sequence MLLVLLSVVLLALSSA. A disordered region spans residues 28–134; sequence FTFTIPDVED…ARHPQEQPLW (107 aa). Over residues 47 to 59 the composition is skewed to pro residues; that stretch reads QRPPPEGLLPRPP. Positions 110 to 119 are enriched in polar residues; that stretch reads VSLQEASSFF. Basic and acidic residues predominate over residues 120-134; sequence QRDRPARHPQEQPLW.

As to expression, abundantly expressed in lacrimal gland where it is found in the acinar cells but not in the intralobular ducts. Also found in the submandibular gland, the parotid and sublingual glands.

It localises to the secreted. The protein is Proline-rich protein 4 (PRR4) of Homo sapiens (Human).